The sequence spans 204 residues: Urease accessory protein UreG (204 aa).

12–19 is a GTP binding site; the sequence is GPVGSGKT.

Belongs to the SIMIBI class G3E GTPase family. UreG subfamily. In terms of assembly, homodimer. UreD, UreF and UreG form a complex that acts as a GTP-hydrolysis-dependent molecular chaperone, activating the urease apoprotein by helping to assemble the nickel containing metallocenter of UreC. The UreE protein probably delivers the nickel.

The protein resides in the cytoplasm. Functionally, facilitates the functional incorporation of the urease nickel metallocenter. This process requires GTP hydrolysis, probably effectuated by UreG. This is Urease accessory protein UreG from Pseudomonas fluorescens (strain SBW25).